The chain runs to 58 residues: Large ribosomal subunit protein uL30 (58 aa).

Belongs to the universal ribosomal protein uL30 family. As to quaternary structure, part of the 50S ribosomal subunit.

This chain is Large ribosomal subunit protein uL30, found in Phocaeicola vulgatus (strain ATCC 8482 / DSM 1447 / JCM 5826 / CCUG 4940 / NBRC 14291 / NCTC 11154) (Bacteroides vulgatus).